The chain runs to 583 residues: Potassium-transporting ATPase potassium-binding subunit (583 aa).

The next 10 membrane-spanning stretches (helical) occupy residues 3–23 (NIIWQCLLYLSLLTALAWPLG), 66–86 (MACVIAFSAVSLVALTALLMA), 135–155 (GLTVQNFVSAAVGIAVLFALI), 177–197 (VLYILLPLSLVMSLLLIEQGV), 266–286 (LEMLALLLIPAALCFTFGAKI), 293–313 (VAIFAAMFILLTSAVSFTVQA), 402–422 (GLYGMLAFVLLTVFLAGLMVG), 440–460 (AVVVCLTTPVVILAGGGLMCL), 506–526 (VLLGVLMLAGRFAPIAAILAM), and 549–569 (LFIFLLIFVILLVGALSFFPA).

Belongs to the KdpA family. In terms of assembly, the system is composed of three essential subunits: KdpA, KdpB and KdpC.

It is found in the cell inner membrane. Its function is as follows. Part of the high-affinity ATP-driven potassium transport (or Kdp) system, which catalyzes the hydrolysis of ATP coupled with the electrogenic transport of potassium into the cytoplasm. This subunit binds the periplasmic potassium ions and delivers the ions to the membrane domain of KdpB through an intramembrane tunnel. This chain is Potassium-transporting ATPase potassium-binding subunit, found in Desulfovibrio desulfuricans (strain ATCC 27774 / DSM 6949 / MB).